The primary structure comprises 187 residues: Ribosome-recycling factor (187 aa).

It belongs to the RRF family.

The protein localises to the cytoplasm. Its function is as follows. Responsible for the release of ribosomes from messenger RNA at the termination of protein biosynthesis. May increase the efficiency of translation by recycling ribosomes from one round of translation to another. The sequence is that of Ribosome-recycling factor from Flavobacterium johnsoniae (strain ATCC 17061 / DSM 2064 / JCM 8514 / BCRC 14874 / CCUG 350202 / NBRC 14942 / NCIMB 11054 / UW101) (Cytophaga johnsonae).